Consider the following 434-residue polypeptide: ATP-dependent protease ATPase subunit HslU (434 aa).

ATP-binding positions include I18, 60-65, D247, E312, and R384; that span reads GVGKTE.

It belongs to the ClpX chaperone family. HslU subfamily. In terms of assembly, a double ring-shaped homohexamer of HslV is capped on each side by a ring-shaped HslU homohexamer. The assembly of the HslU/HslV complex is dependent on binding of ATP.

It localises to the cytoplasm. In terms of biological role, ATPase subunit of a proteasome-like degradation complex; this subunit has chaperone activity. The binding of ATP and its subsequent hydrolysis by HslU are essential for unfolding of protein substrates subsequently hydrolyzed by HslV. HslU recognizes the N-terminal part of its protein substrates and unfolds these before they are guided to HslV for hydrolysis. This is ATP-dependent protease ATPase subunit HslU from Brucella anthropi (strain ATCC 49188 / DSM 6882 / CCUG 24695 / JCM 21032 / LMG 3331 / NBRC 15819 / NCTC 12168 / Alc 37) (Ochrobactrum anthropi).